Consider the following 445-residue polypeptide: Dihydroorotate dehydrogenase (quinone), mitochondrial (445 aa).

Residues 1-16 constitute a mitochondrion transit peptide; that stretch reads MNSGFPRILSKKLFTL. A helical transmembrane segment spans residues 39-56; the sequence is LLKYTVGIAIGSFAGFYF. FMN is bound by residues 124–128 and serine 148; that span reads AGLDK. Residue lysine 128 participates in substrate binding. 173–177 is a substrate binding site; sequence NRYGF. FMN contacts are provided by asparagine 221 and asparagine 251. 251–256 serves as a coordination point for substrate; the sequence is NVSSPN. Serine 254 functions as the Nucleophile in the catalytic mechanism. 2 residues coordinate FMN: lysine 302 and serine 330. Residue 331–332 coordinates substrate; sequence NT. FMN-binding positions include glycine 356, glycine 386, and 407–408; that span reads YT.

It belongs to the dihydroorotate dehydrogenase family. Type 2 subfamily. Requires FMN as cofactor.

It is found in the mitochondrion inner membrane. It catalyses the reaction (S)-dihydroorotate + a quinone = orotate + a quinol. The protein operates within pyrimidine metabolism; UMP biosynthesis via de novo pathway; orotate from (S)-dihydroorotate (quinone route): step 1/1. Catalyzes the conversion of dihydroorotate to orotate with quinone as electron acceptor. The polypeptide is Dihydroorotate dehydrogenase (quinone), mitochondrial (URA9) (Kluyveromyces lactis (strain ATCC 8585 / CBS 2359 / DSM 70799 / NBRC 1267 / NRRL Y-1140 / WM37) (Yeast)).